The primary structure comprises 164 residues: Mediator of RNA polymerase II transcription subunit 21 (164 aa).

The segment at 49-81 (APLPANQTQQGSTLGSNRQTVSPSTQAEAESNF) is disordered. Polar residues predominate over residues 53–81 (ANQTQQGSTLGSNRQTVSPSTQAEAESNF). Residues 114-146 (ESQLKIIDDLSKELQSVEQEQVKKIQEKDKLLK) adopt a coiled-coil conformation.

Belongs to the Mediator complex subunit 21 family. Component of the Mediator complex.

Its subcellular location is the nucleus. Its function is as follows. Component of the Mediator complex, a coactivator involved in the regulated transcription of nearly all RNA polymerase II-dependent genes. Mediator functions as a bridge to convey information from gene-specific regulatory proteins to the basal RNA polymerase II transcription machinery. Mediator is recruited to promoters by direct interactions with regulatory proteins and serves as a scaffold for the assembly of a functional preinitiation complex with RNA polymerase II and the general transcription factors. This is Mediator of RNA polymerase II transcription subunit 21 (SRB7) from Scheffersomyces stipitis (strain ATCC 58785 / CBS 6054 / NBRC 10063 / NRRL Y-11545) (Yeast).